A 239-amino-acid chain; its full sequence is 7-cyano-7-deazaguanine synthase (239 aa).

Residue 16–26 coordinates ATP; the sequence is FSGGQDSTTCL. 4 residues coordinate Zn(2+): Cys204, Cys219, Cys222, and Cys225.

This sequence belongs to the QueC family. Zn(2+) serves as cofactor.

The enzyme catalyses 7-carboxy-7-deazaguanine + NH4(+) + ATP = 7-cyano-7-deazaguanine + ADP + phosphate + H2O + H(+). The protein operates within purine metabolism; 7-cyano-7-deazaguanine biosynthesis. Its function is as follows. Catalyzes the ATP-dependent conversion of 7-carboxy-7-deazaguanine (CDG) to 7-cyano-7-deazaguanine (preQ(0)). This Polaromonas naphthalenivorans (strain CJ2) protein is 7-cyano-7-deazaguanine synthase.